A 1155-amino-acid chain; its full sequence is DNA-directed RNA polymerase subunit beta (1155 aa).

The protein belongs to the RNA polymerase beta chain family. In terms of assembly, the RNAP catalytic core consists of 2 alpha, 1 beta, 1 beta' and 1 omega subunit. When a sigma factor is associated with the core the holoenzyme is formed, which can initiate transcription.

The enzyme catalyses RNA(n) + a ribonucleoside 5'-triphosphate = RNA(n+1) + diphosphate. DNA-dependent RNA polymerase catalyzes the transcription of DNA into RNA using the four ribonucleoside triphosphates as substrates. In Borrelia duttonii (strain Ly), this protein is DNA-directed RNA polymerase subunit beta.